Here is a 298-residue protein sequence, read N- to C-terminus: NADH-cytochrome b5 reductase 2 (298 aa).

A helical membrane pass occupies residues F15–A38. The FAD-binding FR-type domain occupies D49–E153. Q156 to L191 contacts FAD.

Belongs to the flavoprotein pyridine nucleotide cytochrome reductase family. Requires FAD as cofactor.

Its subcellular location is the mitochondrion outer membrane. The enzyme catalyses 2 Fe(III)-[cytochrome b5] + NADH = 2 Fe(II)-[cytochrome b5] + NAD(+) + H(+). Functionally, may mediate the reduction of outer membrane cytochrome b5. In Scheffersomyces stipitis (strain ATCC 58785 / CBS 6054 / NBRC 10063 / NRRL Y-11545) (Yeast), this protein is NADH-cytochrome b5 reductase 2 (MCR1).